The primary structure comprises 232 residues: Large ribosomal subunit protein uL1 (232 aa).

It belongs to the universal ribosomal protein uL1 family. In terms of assembly, part of the 50S ribosomal subunit.

In terms of biological role, binds directly to 23S rRNA. The L1 stalk is quite mobile in the ribosome, and is involved in E site tRNA release. Protein L1 is also a translational repressor protein, it controls the translation of the L11 operon by binding to its mRNA. This Methylorubrum extorquens (strain CM4 / NCIMB 13688) (Methylobacterium extorquens) protein is Large ribosomal subunit protein uL1.